The sequence spans 102 residues: MTKSELIEAIASKQPHLAHKDVEDAVKKMLEHMSETLANGKRIEIRGFGSFSLHHRPARMGRNPKTGEPVALPAKYVPHFKPGKELRERVNSSRHQAPLRSQ.

Residues 54 to 102 form a disordered region; that stretch reads HHRPARMGRNPKTGEPVALPAKYVPHFKPGKELRERVNSSRHQAPLRSQ. Residues 82-91 show a composition bias toward basic and acidic residues; the sequence is PGKELRERVN. The span at 93 to 102 shows a compositional bias: polar residues; that stretch reads SRHQAPLRSQ.

It belongs to the bacterial histone-like protein family. In terms of assembly, heterodimer of an alpha and a beta chain.

In terms of biological role, this protein is one of the two subunits of integration host factor, a specific DNA-binding protein that functions in genetic recombination as well as in transcriptional and translational control. The chain is Integration host factor subunit beta from Halorhodospira halophila (strain DSM 244 / SL1) (Ectothiorhodospira halophila (strain DSM 244 / SL1)).